The primary structure comprises 527 residues: Peptide chain release factor 3 (527 aa).

Residues 9-278 (NKRRTFAIIS…GLTQWAPKPQ (270 aa)) enclose the tr-type G domain. GTP-binding positions include 18–25 (SHPDAGKT), 86–90 (DTPGH), and 140–143 (NKLD).

Belongs to the TRAFAC class translation factor GTPase superfamily. Classic translation factor GTPase family. PrfC subfamily.

It is found in the cytoplasm. Increases the formation of ribosomal termination complexes and stimulates activities of RF-1 and RF-2. It binds guanine nucleotides and has strong preference for UGA stop codons. It may interact directly with the ribosome. The stimulation of RF-1 and RF-2 is significantly reduced by GTP and GDP, but not by GMP. The polypeptide is Peptide chain release factor 3 (Haemophilus influenzae (strain PittEE)).